The chain runs to 174 residues: Inactive signal peptidase IA (174 aa).

Residues Met1–Tyr7 lie on the Cytoplasmic side of the membrane. Residues Leu8–Gly28 traverse the membrane as a helical segment. The Extracellular segment spans residues His29–Ser174.

It belongs to the peptidase S26 family.

The protein resides in the cell membrane. Catalytically inactive. This chain is Inactive signal peptidase IA (spsA), found in Staphylococcus aureus (strain COL).